The following is a 200-amino-acid chain: Large ribosomal subunit protein uL4 (200 aa).

The disordered stretch occupies residues 43–65 (RAQKTRSEVSGGGAKPWRQKGTG).

This sequence belongs to the universal ribosomal protein uL4 family. In terms of assembly, part of the 50S ribosomal subunit.

In terms of biological role, one of the primary rRNA binding proteins, this protein initially binds near the 5'-end of the 23S rRNA. It is important during the early stages of 50S assembly. It makes multiple contacts with different domains of the 23S rRNA in the assembled 50S subunit and ribosome. Its function is as follows. Forms part of the polypeptide exit tunnel. In Aliivibrio salmonicida (strain LFI1238) (Vibrio salmonicida (strain LFI1238)), this protein is Large ribosomal subunit protein uL4.